We begin with the raw amino-acid sequence, 382 residues long: Succinyl-diaminopimelate desuccinylase (382 aa).

Residue His-71 participates in Zn(2+) binding. Asp-73 is an active-site residue. Residue Asp-105 participates in Zn(2+) binding. The active-site Proton acceptor is Glu-139. Zn(2+)-binding residues include Glu-140, Glu-168, and His-354.

This sequence belongs to the peptidase M20A family. DapE subfamily. Homodimer. Zn(2+) serves as cofactor. It depends on Co(2+) as a cofactor.

The catalysed reaction is N-succinyl-(2S,6S)-2,6-diaminopimelate + H2O = (2S,6S)-2,6-diaminopimelate + succinate. The protein operates within amino-acid biosynthesis; L-lysine biosynthesis via DAP pathway; LL-2,6-diaminopimelate from (S)-tetrahydrodipicolinate (succinylase route): step 3/3. Catalyzes the hydrolysis of N-succinyl-L,L-diaminopimelic acid (SDAP), forming succinate and LL-2,6-diaminopimelate (DAP), an intermediate involved in the bacterial biosynthesis of lysine and meso-diaminopimelic acid, an essential component of bacterial cell walls. This is Succinyl-diaminopimelate desuccinylase from Stutzerimonas stutzeri (strain A1501) (Pseudomonas stutzeri).